A 619-amino-acid polypeptide reads, in one-letter code: Chaperone protein HscA homolog (619 aa).

The protein belongs to the heat shock protein 70 family.

Functionally, chaperone involved in the maturation of iron-sulfur cluster-containing proteins. Has a low intrinsic ATPase activity which is markedly stimulated by HscB. The chain is Chaperone protein HscA homolog from Shewanella denitrificans (strain OS217 / ATCC BAA-1090 / DSM 15013).